Consider the following 316-residue polypeptide: MIAGLKGLKLPKDPRSSVTRTATDWAYAAGWMAVRALPEFAVRNAFDTGARYFARHGGPEQLRKNLARVLGVPPAAVPDPLMCASLESYGRYWREVFRLPTINHRKLARQLDRVIGGLDHLDAALAAGLGAVLALPHSGNWDMAGMWLVQRHGTFTTVAERLKPESLYQRFIDYRESLGFEVLPLSGGERPPFEVLSERLRNNRVVCLMAERDLTRTGVEVDFFGEPTRMPVGPAKLAVETGAALLPTHCWFEGRGWGFQVYPALDCTSGDVAAITQALADRFAQNIAAHPADWHMLQPQWLADLSESRRAQLRSR.

The active-site Proton acceptor is the histidine 137. Residues histidine 137 and arginine 175 each contribute to the hexadecanoyl-CoA site. Residue glutamate 211 is part of the active site. Residue glutamate 240 participates in hexadecanoyl-CoA binding.

It belongs to the LpxL/LpxM/LpxP family.

It localises to the cell inner membrane. It catalyses the reaction a 2,6-O-bis(alpha-D-mannopyranosyl)-1-phosphatidyl-1D-myo-inositol + an acyl-CoA = a 2-O-(alpha-D-mannosyl)-6-O-(6-O-acyl-alpha-D-mannosyl)-1-phosphatidyl-1D-myo-inositol + CoA. It carries out the reaction a 1,2-diacyl-sn-glycero-3-phospho-[alpha-D-mannopyranosyl-(1&lt;-&gt;6)-D-myo-inositol] + an acyl-CoA = a 1,2-diacyl-sn-glycero-3-phospho-[alpha-D-6-acyl-mannopyranosyl-(1&lt;-&gt;6)-D-myo-inositol] + CoA. It participates in phospholipid metabolism; phosphatidylinositol metabolism. Functionally, catalyzes the transfer of a palmitoyl moiety from palmitoyl-CoA to the 6-position of the mannose ring linked to the 2-position of myo-inositol in phosphatidyl-myo-inositol monomannoside (PIM1) or dimannoside (PIM2). Essential for growth and survival in axenic cultures and during macrophage infection and in a mouse model of infection. The sequence is that of Phosphatidylinositol mannoside acyltransferase from Mycobacterium tuberculosis (strain ATCC 25618 / H37Rv).